The primary structure comprises 157 residues: Protein-export protein SecB (157 aa).

This sequence belongs to the SecB family. As to quaternary structure, homotetramer, a dimer of dimers. One homotetramer interacts with 1 SecA dimer.

It localises to the cytoplasm. One of the proteins required for the normal export of preproteins out of the cell cytoplasm. It is a molecular chaperone that binds to a subset of precursor proteins, maintaining them in a translocation-competent state. It also specifically binds to its receptor SecA. In Alcanivorax borkumensis (strain ATCC 700651 / DSM 11573 / NCIMB 13689 / SK2), this protein is Protein-export protein SecB.